The following is a 148-amino-acid chain: SsrA-binding protein (148 aa).

The segment at 124–148 is disordered; the sequence is QFDKRETEKDRDWQREKARLMREKA.

It belongs to the SmpB family.

The protein localises to the cytoplasm. Functionally, required for rescue of stalled ribosomes mediated by trans-translation. Binds to transfer-messenger RNA (tmRNA), required for stable association of tmRNA with ribosomes. tmRNA and SmpB together mimic tRNA shape, replacing the anticodon stem-loop with SmpB. tmRNA is encoded by the ssrA gene; the 2 termini fold to resemble tRNA(Ala) and it encodes a 'tag peptide', a short internal open reading frame. During trans-translation Ala-aminoacylated tmRNA acts like a tRNA, entering the A-site of stalled ribosomes, displacing the stalled mRNA. The ribosome then switches to translate the ORF on the tmRNA; the nascent peptide is terminated with the 'tag peptide' encoded by the tmRNA and targeted for degradation. The ribosome is freed to recommence translation, which seems to be the essential function of trans-translation. The polypeptide is SsrA-binding protein (Ralstonia pickettii (strain 12J)).